Here is a 948-residue protein sequence, read N- to C-terminus: Valine--tRNA ligase (948 aa).

A 'HIGH' region motif is present at residues 40–50 (PNVTGSLHMGH). The 'KMSKS' region signature appears at 551 to 555 (KMSKS). Lysine 554 is a binding site for ATP. The stretch at 879 to 947 (LIDKGAELAR…LAEQHARISS (69 aa)) forms a coiled coil.

Belongs to the class-I aminoacyl-tRNA synthetase family. ValS type 1 subfamily. Monomer.

The protein resides in the cytoplasm. It catalyses the reaction tRNA(Val) + L-valine + ATP = L-valyl-tRNA(Val) + AMP + diphosphate. Its function is as follows. Catalyzes the attachment of valine to tRNA(Val). As ValRS can inadvertently accommodate and process structurally similar amino acids such as threonine, to avoid such errors, it has a 'posttransfer' editing activity that hydrolyzes mischarged Thr-tRNA(Val) in a tRNA-dependent manner. The chain is Valine--tRNA ligase from Pseudomonas fluorescens (strain ATCC BAA-477 / NRRL B-23932 / Pf-5).